A 67-amino-acid polypeptide reads, in one-letter code: DNA-directed RNA polymerase subunit omega (67 aa).

This sequence belongs to the RNA polymerase subunit omega family. As to quaternary structure, the RNAP catalytic core consists of 2 alpha, 1 beta, 1 beta' and 1 omega subunit. When a sigma factor is associated with the core the holoenzyme is formed, which can initiate transcription.

It carries out the reaction RNA(n) + a ribonucleoside 5'-triphosphate = RNA(n+1) + diphosphate. Functionally, promotes RNA polymerase assembly. Latches the N- and C-terminal regions of the beta' subunit thereby facilitating its interaction with the beta and alpha subunits. The polypeptide is DNA-directed RNA polymerase subunit omega (Dictyoglomus turgidum (strain DSM 6724 / Z-1310)).